Here is a 793-residue protein sequence, read N- to C-terminus: Endonuclease MutS2 (793 aa).

329-336 (GPNTGGKT) is an ATP binding site. Positions 611–639 (LARARQAVEPTEEEQRARRRGEVPRGLKP) are disordered. The segment covering 623 to 639 (EEQRARRRGEVPRGLKP) has biased composition (basic and acidic residues). The 76-residue stretch at 717-792 (VDLRGLMVEE…GDGVTVAKLR (76 aa)) folds into the Smr domain.

Belongs to the DNA mismatch repair MutS family. MutS2 subfamily. Homodimer. Binds to stalled ribosomes, contacting rRNA.

Its function is as follows. Endonuclease that is involved in the suppression of homologous recombination and thus may have a key role in the control of bacterial genetic diversity. Acts as a ribosome collision sensor, splitting the ribosome into its 2 subunits. Detects stalled/collided 70S ribosomes which it binds and splits by an ATP-hydrolysis driven conformational change. Acts upstream of the ribosome quality control system (RQC), a ribosome-associated complex that mediates the extraction of incompletely synthesized nascent chains from stalled ribosomes and their subsequent degradation. Probably generates substrates for RQC. This Symbiobacterium thermophilum (strain DSM 24528 / JCM 14929 / IAM 14863 / T) protein is Endonuclease MutS2.